A 307-amino-acid polypeptide reads, in one-letter code: Acetyl-coenzyme A carboxylase carboxyl transferase subunit beta (307 aa).

The region spanning 25 to 294 (LWIKDPESGE…TEENGSRRLP (270 aa)) is the CoA carboxyltransferase N-terminal domain.

Belongs to the AccD/PCCB family. Acetyl-CoA carboxylase is a heterohexamer composed of biotin carboxyl carrier protein (AccB), biotin carboxylase (AccC) and two subunits each of ACCase subunit alpha (AccA) and ACCase subunit beta (AccD).

The protein localises to the cytoplasm. The catalysed reaction is N(6)-carboxybiotinyl-L-lysyl-[protein] + acetyl-CoA = N(6)-biotinyl-L-lysyl-[protein] + malonyl-CoA. The protein operates within lipid metabolism; malonyl-CoA biosynthesis; malonyl-CoA from acetyl-CoA: step 1/1. Component of the acetyl coenzyme A carboxylase (ACC) complex. Biotin carboxylase (BC) catalyzes the carboxylation of biotin on its carrier protein (BCCP) and then the CO(2) group is transferred by the transcarboxylase to acetyl-CoA to form malonyl-CoA. The chain is Acetyl-coenzyme A carboxylase carboxyl transferase subunit beta from Chelativorans sp. (strain BNC1).